The primary structure comprises 204 residues: Small ribosomal subunit protein uS4 (204 aa).

Residues 25–47 (SPVNKREYGPGQHGQRRKKPSDY) are disordered. Residues 93–156 (RRLDAVVYRM…KQFAFVMEAA (64 aa)) enclose the S4 RNA-binding domain.

Belongs to the universal ribosomal protein uS4 family. Part of the 30S ribosomal subunit. Contacts protein S5. The interaction surface between S4 and S5 is involved in control of translational fidelity.

In terms of biological role, one of the primary rRNA binding proteins, it binds directly to 16S rRNA where it nucleates assembly of the body of the 30S subunit. Its function is as follows. With S5 and S12 plays an important role in translational accuracy. This chain is Small ribosomal subunit protein uS4, found in Rhodospirillum centenum (strain ATCC 51521 / SW).